Reading from the N-terminus, the 342-residue chain is Trans-3-hydroxy-L-proline dehydratase (342 aa).

Ser-90 acts as the Proton acceptor in catalysis. Residues 91 to 92 (GS), Asp-251, and 256 to 257 (GT) contribute to the substrate site.

It belongs to the proline racemase family.

The catalysed reaction is trans-3-hydroxy-L-proline = 1-pyrroline-2-carboxylate + H2O. Its function is as follows. Catalyzes the dehydration of trans-3-hydroxy-L-proline (t3LHyp) to Delta(1)-pyrroline-2-carboxylate (Pyr2C). Is likely involved in a degradation pathway that converts t3LHyp to L-proline, which would allow P.denitrificans to grow on t3LHyp as a sole carbon source. Displays neither proline racemase activity nor 4-hydroxyproline 2-epimerase activity. In Paracoccus denitrificans (strain Pd 1222), this protein is Trans-3-hydroxy-L-proline dehydratase.